The chain runs to 301 residues: Tetratricopeptide repeat domain-containing protein PYG7, chloroplastic (301 aa).

The N-terminal 61 residues, Met-1 to Ser-61, are a transit peptide targeting the chloroplast. Helical transmembrane passes span Thr-82–Ala-102 and Ile-121–Ile-141. 3 TPR repeats span residues Ala-168–Asp-201, Ala-206–Tyr-239, and Val-240–Asn-273.

In terms of assembly, interacts with PSA3.

The protein localises to the plastid. It is found in the chloroplast thylakoid membrane. Nuclear genome-encoded factor required for the accumulation of photosystem I (PSI). Functions as a PSI biogenesis factor. Cooperates with PSA3 to promote the stable assembly of PSI in the thylakoid membrane. May target primarily the PsaC subunit. The polypeptide is Tetratricopeptide repeat domain-containing protein PYG7, chloroplastic (Arabidopsis thaliana (Mouse-ear cress)).